The primary structure comprises 507 residues: Chromosomal replication initiator protein DnaA (507 aa).

The interval 1 to 112 (MTDDPGSGFT…PATDEADDTT (112 aa)) is domain I, interacts with DnaA modulators. The interval 99 to 162 (RIAPPATDEA…ERPRNTDSAT (64 aa)) is disordered. Positions 113–127 (VPPSENPATTSPDTT) are enriched in polar residues. A domain II region spans residues 113–166 (VPPSENPATTSPDTTTDNDEIDDSAAARGDNQHSWPSYFTERPRNTDSATAGVT). Positions 167–383 (SLNRRYTFDT…GALIRVTAFA (217 aa)) are domain III, AAA+ region. Positions 211, 213, 214, and 215 each coordinate ATP. The segment at 384-507 (SLNKTPIDKA…TTRIRQRSKR (124 aa)) is domain IV, binds dsDNA.

This sequence belongs to the DnaA family. Oligomerizes as a right-handed, spiral filament on DNA at oriC.

The protein localises to the cytoplasm. Plays an essential role in the initiation and regulation of chromosomal replication. ATP-DnaA binds to the origin of replication (oriC) to initiate formation of the DNA replication initiation complex once per cell cycle. Binds the DnaA box (a 9 base pair repeat at the origin) and separates the double-stranded (ds)DNA. Forms a right-handed helical filament on oriC DNA; dsDNA binds to the exterior of the filament while single-stranded (ss)DNA is stabiized in the filament's interior. The ATP-DnaA-oriC complex binds and stabilizes one strand of the AT-rich DNA unwinding element (DUE), permitting loading of DNA polymerase. After initiation quickly degrades to an ADP-DnaA complex that is not apt for DNA replication. Binds acidic phospholipids. This Mycobacterium bovis (strain BCG / Tokyo 172 / ATCC 35737 / TMC 1019) protein is Chromosomal replication initiator protein DnaA.